The sequence spans 250 residues: 5'/3'-nucleotidase SurE (250 aa).

Residues aspartate 8, aspartate 9, serine 39, and asparagine 92 each contribute to the a divalent metal cation site.

It belongs to the SurE nucleotidase family. It depends on a divalent metal cation as a cofactor.

Its subcellular location is the cytoplasm. It carries out the reaction a ribonucleoside 5'-phosphate + H2O = a ribonucleoside + phosphate. The catalysed reaction is a ribonucleoside 3'-phosphate + H2O = a ribonucleoside + phosphate. The enzyme catalyses [phosphate](n) + H2O = [phosphate](n-1) + phosphate + H(+). Nucleotidase with a broad substrate specificity as it can dephosphorylate various ribo- and deoxyribonucleoside 5'-monophosphates and ribonucleoside 3'-monophosphates with highest affinity to 3'-AMP. Also hydrolyzes polyphosphate (exopolyphosphatase activity) with the preference for short-chain-length substrates (P20-25). Might be involved in the regulation of dNTP and NTP pools, and in the turnover of 3'-mononucleotides produced by numerous intracellular RNases (T1, T2, and F) during the degradation of various RNAs. The sequence is that of 5'/3'-nucleotidase SurE from Wigglesworthia glossinidia brevipalpis.